Consider the following 105-residue polypeptide: Pyrimidine/purine nucleoside phosphorylase (105 aa).

Belongs to the nucleoside phosphorylase PpnP family.

The catalysed reaction is a purine D-ribonucleoside + phosphate = a purine nucleobase + alpha-D-ribose 1-phosphate. It catalyses the reaction adenosine + phosphate = alpha-D-ribose 1-phosphate + adenine. It carries out the reaction cytidine + phosphate = cytosine + alpha-D-ribose 1-phosphate. The enzyme catalyses guanosine + phosphate = alpha-D-ribose 1-phosphate + guanine. The catalysed reaction is inosine + phosphate = alpha-D-ribose 1-phosphate + hypoxanthine. It catalyses the reaction thymidine + phosphate = 2-deoxy-alpha-D-ribose 1-phosphate + thymine. It carries out the reaction uridine + phosphate = alpha-D-ribose 1-phosphate + uracil. The enzyme catalyses xanthosine + phosphate = alpha-D-ribose 1-phosphate + xanthine. Functionally, catalyzes the phosphorolysis of diverse nucleosides, yielding D-ribose 1-phosphate and the respective free bases. Can use uridine, adenosine, guanosine, cytidine, thymidine, inosine and xanthosine as substrates. Also catalyzes the reverse reactions. This Albidiferax ferrireducens (strain ATCC BAA-621 / DSM 15236 / T118) (Rhodoferax ferrireducens) protein is Pyrimidine/purine nucleoside phosphorylase.